The chain runs to 120 residues: Small ribosomal subunit protein uS12c (120 aa).

Belongs to the universal ribosomal protein uS12 family. Part of the 30S ribosomal subunit.

Its subcellular location is the plastid. The protein resides in the apicoplast. With S4 and S5 plays an important role in translational accuracy. Located at the interface of the 30S and 50S subunits. This chain is Small ribosomal subunit protein uS12c (rps12), found in Eimeria tenella (Coccidian parasite).